Reading from the N-terminus, the 484-residue chain is PTS system MurNAc-GlcNAc-specific EIIBC component (484 aa).

A PTS EIIB type-1 domain is found at 5–87 (QQLAERIIAA…AELSGVKLGD (83 aa)). Catalysis depends on C27, which acts as the Phosphocysteine intermediate; for EIIB activity. Residues 130 to 484 (KSIANIFIPL…AMRQTDLLGD (355 aa)) form the PTS EIIC type-1 domain. 10 helical membrane-spanning segments follow: residues 135–155 (IFIP…IAAV), 160–180 (MVAG…FNVI), 200–220 (FGAT…TGIA), 234–254 (LQPG…LSIV), 274–294 (IALL…AGFV), 305–325 (IISI…LPLV), 349–369 (LLPI…ALWV), 384–404 (ALPV…TLPL), 408–428 (FLTA…IGHI), and 450–470 (LGYI…TYLF).

It is found in the cell membrane. It catalyses the reaction N-acetyl-beta-D-muramate-(1-&gt;4)-N-acetyl-D-glucosamine(out) + N(pros)-phospho-L-histidyl-[protein] = 6-phospho-N-acetyl-beta-D-muramate-(1-&gt;4)-N-acetyl-D-glucosamine(in) + L-histidyl-[protein]. Its pathway is cell wall biogenesis; peptidoglycan recycling. The phosphoenolpyruvate-dependent sugar phosphotransferase system (sugar PTS), a major carbohydrate active transport system, catalyzes the phosphorylation of incoming sugar substrates concomitantly with their translocation across the cell membrane. This system is involved in the uptake and phosphorylation of MurNAc-GlcNAc, the principle peptidoglycan turnover product of S.aureus, yielding cytoplasmic MurNAc 6P-GlcNAc. The sequence is that of PTS system MurNAc-GlcNAc-specific EIIBC component from Staphylococcus aureus (strain bovine RF122 / ET3-1).